A 232-amino-acid polypeptide reads, in one-letter code: UPF0177 protein in abiGi 5'region (232 aa).

6 consecutive transmembrane segments (helical) span residues 12 to 32, 47 to 67, 86 to 106, 124 to 144, 165 to 185, and 206 to 226; these read YLSL…ILAY, VVAT…GILI, LLFL…SYTY, SIQI…APIF, IVSC…LIVY, and ILVH…LQVI.

Belongs to the UPF0177 family.

It is found in the cell membrane. The function of this protein is currently unknown, but it has been shown that it is not necessary for phage resistance. The polypeptide is UPF0177 protein in abiGi 5'region (Lactococcus lactis subsp. cremoris (Streptococcus cremoris)).